The sequence spans 203 residues: CASP-like protein 5A2 (203 aa).

The Cytoplasmic segment spans residues 1-63 (MRASRPVVHP…KDPPGAPGTP (63 aa)). Positions 39–58 (AAHGGENAQPRGVRMKDPPG) are disordered. The chain crosses the membrane as a helical span at residues 64–84 (GGLGLRLVQAFFAAAALAVMA). Residues 85 to 94 (STDDFPSVSA) lie on the Extracellular side of the membrane. Residues 95–115 (FCYLVAAAILQCLWSLSLAVV) form a helical membrane-spanning segment. The Cytoplasmic portion of the chain corresponds to 116-139 (DIYALLVKRSLRNPQAVCIFTIGD). A helical membrane pass occupies residues 140-160 (GITGTLTLGAACASAGITVLI). Residues 161 to 177 (GNDLNICANNHCASFET) lie on the Extracellular side of the membrane. A helical transmembrane segment spans residues 178-198 (ATAMAFISWFALAPSCVLNFW). Residues 199–203 (SMASR) are Cytoplasmic-facing.

The protein belongs to the Casparian strip membrane proteins (CASP) family. Homodimer and heterodimers.

Its subcellular location is the cell membrane. The polypeptide is CASP-like protein 5A2 (Oryza sativa subsp. indica (Rice)).